The sequence spans 255 residues: Thrombin-like enzyme batroxobin (255 aa).

Residues 1–18 (MVLIRVIANLLILQVSYA) form the signal peptide. Positions 19 to 24 (QKSSEL) are excised as a propeptide. A Peptidase S1 domain is found at 25-247 (VIGGDECDIN…YLPWIQSIIA (223 aa)). 6 disulfides stabilise this stretch: cysteine 31–cysteine 163, cysteine 50–cysteine 66, cysteine 98–cysteine 254, cysteine 142–cysteine 208, cysteine 174–cysteine 187, and cysteine 198–cysteine 223. Catalysis depends on charge relay system residues histidine 65 and aspartate 110. Asparagine 170 is a glycosylation site (N-linked (GlcNAc...) asparagine). Serine 202 acts as the Charge relay system in catalysis. Asparagine 249 carries N-linked (GlcNAc...) asparagine glycosylation.

The protein belongs to the peptidase S1 family. Snake venom subfamily. As to quaternary structure, monomer. Expressed by the venom gland.

It localises to the secreted. The catalysed reaction is Selective cleavage of Arg-|-Xaa bond in fibrinogen, to form fibrin, and release fibrinopeptide A. The specificity of further degradation of fibrinogen varies with species origin of the enzyme.. Thrombin-like snake venom serine protease. Cleaves Arg-Gly bonds in fibrinogen alpha chains (FGA). In Bothrops atrox (Barba amarilla), this protein is Thrombin-like enzyme batroxobin.